Consider the following 125-residue polypeptide: MEIGVDIVELERIERAHNRYGRKFLEKFMTQPEIELCLAKPSPVASIAGRFAAKEAVVKALGTGISGGVFWKSFEVLNDSRGRPVVTLLDKACFPPGCVIKISISHDRHSAIAAALLQYKTRGRC.

The Mg(2+) site is built by Asp-6 and Glu-55.

This sequence belongs to the P-Pant transferase superfamily. AcpS family. Mg(2+) serves as cofactor.

It is found in the cytoplasm. The enzyme catalyses apo-[ACP] + CoA = holo-[ACP] + adenosine 3',5'-bisphosphate + H(+). Functionally, transfers the 4'-phosphopantetheine moiety from coenzyme A to a Ser of acyl-carrier-protein. The polypeptide is Holo-[acyl-carrier-protein] synthase (Chlorobium phaeovibrioides (strain DSM 265 / 1930) (Prosthecochloris vibrioformis (strain DSM 265))).